A 162-amino-acid chain; its full sequence is Caveolin-2 (162 aa).

At 1–86 the chain is on the cytoplasmic side; sequence MGLETEKADV…FEISKYVMYK (86 aa). Y19 carries the post-translational modification Phosphotyrosine; by SRC. Phosphoserine occurs at positions 20 and 23. Y27 carries the post-translational modification Phosphotyrosine; by SRC. Position 36 is a phosphoserine (S36). The segment at residues 87-107 is an intramembrane region (helical); it reads FLTVFLAIPLAFIAGILFATL. Residues 108–162 lie on the Cytoplasmic side of the membrane; the sequence is SCLHIWILMPFVKTCLMVLPSVQTIWKSVTDVFIAPLCTSVGRSFSSVSLQLSQD.

Belongs to the caveolin family. In terms of assembly, monomer or homodimer. Interacts with CAV1; the interaction forms a stable heterooligomeric complex that is required for targeting to lipid rafts and for caveolae formation. Tyrosine phosphorylated forms do not form heterooligomers with the Tyr-19-phosphorylated form existing as a monomer or dimer, and the Tyr-27-form as a monomer only. Interacts (tyrosine phosphorylated form) with the SH2 domain-containing proteins, RASA1, NCK1 and SRC. Interacts (tyrosine phosphorylated form) with INSR, the interaction (Tyr-27-phosphorylated form) is increased on insulin stimulation. Interacts (Tyr-19 phosphorylated form) with MAPK1 (phosphorylated form); the interaction, promoted by insulin, leads to nuclear location and MAPK1 activation. Interacts with STAT3; the interaction is increased on insulin-induced tyrosine phosphorylation leading to STAT activation. Post-translationally, phosphorylated on serine and tyrosine residues. CAV1 promotes phosphorylation on Ser-23 which then targets the complex to the plasma membrane, lipid rafts and caveolae. Phosphorylation on Ser-36 appears to modulate mitosis in endothelial cells. Phosphorylation on both Tyr-19 and Tyr-27 is required for insulin-induced 'Ser-727' phosphorylation of STAT3 and its activation. Phosphorylation on Tyr-19 is required for insulin-induced phosphorylation of MAPK1 and DNA binding of STAT3. Tyrosine phosphorylation is induced by both EGF and insulin (By. similarity).

It is found in the nucleus. The protein resides in the cytoplasm. The protein localises to the golgi apparatus membrane. Its subcellular location is the cell membrane. It localises to the membrane. It is found in the caveola. Its function is as follows. May act as a scaffolding protein within caveolar membranes. Interacts directly with G-protein alpha subunits and can functionally regulate their activity. Acts as an accessory protein in conjunction with CAV1 in targeting to lipid rafts and driving caveolae formation. The Ser-36 phosphorylated form has a role in modulating mitosis in endothelial cells. Positive regulator of cellular mitogenesis of the MAPK signaling pathway. Required for the insulin-stimulated nuclear translocation and activation of MAPK1 and STAT3, and the subsequent regulation of cell cycle progression. This Chlorocebus aethiops (Green monkey) protein is Caveolin-2 (CAV2).